The primary structure comprises 257 residues: Imidazole glycerol phosphate synthase subunit HisF (257 aa).

Residues Asp12 and Asp131 contribute to the active site.

It belongs to the HisA/HisF family. In terms of assembly, heterodimer of HisH and HisF.

The protein resides in the cytoplasm. The catalysed reaction is 5-[(5-phospho-1-deoxy-D-ribulos-1-ylimino)methylamino]-1-(5-phospho-beta-D-ribosyl)imidazole-4-carboxamide + L-glutamine = D-erythro-1-(imidazol-4-yl)glycerol 3-phosphate + 5-amino-1-(5-phospho-beta-D-ribosyl)imidazole-4-carboxamide + L-glutamate + H(+). The protein operates within amino-acid biosynthesis; L-histidine biosynthesis; L-histidine from 5-phospho-alpha-D-ribose 1-diphosphate: step 5/9. In terms of biological role, IGPS catalyzes the conversion of PRFAR and glutamine to IGP, AICAR and glutamate. The HisF subunit catalyzes the cyclization activity that produces IGP and AICAR from PRFAR using the ammonia provided by the HisH subunit. The polypeptide is Imidazole glycerol phosphate synthase subunit HisF (Marinobacter nauticus (strain ATCC 700491 / DSM 11845 / VT8) (Marinobacter aquaeolei)).